The primary structure comprises 525 residues: GMP synthase [glutamine-hydrolyzing] (525 aa).

In terms of domain architecture, Glutamine amidotransferase type-1 spans 8–207 (KILILDFGSQ…ALDICGCAAN (200 aa)). Cys85 serves as the catalytic Nucleophile. Catalysis depends on residues His181 and Glu183. Positions 208-400 (WKPSSIIEDA…LGLPYNMLYR (193 aa)) constitute a GMPS ATP-PPase domain. 235–241 (SGGVDSS) contributes to the ATP binding site.

As to quaternary structure, homodimer.

The catalysed reaction is XMP + L-glutamine + ATP + H2O = GMP + L-glutamate + AMP + diphosphate + 2 H(+). Its pathway is purine metabolism; GMP biosynthesis; GMP from XMP (L-Gln route): step 1/1. In terms of biological role, catalyzes the synthesis of GMP from XMP. The sequence is that of GMP synthase [glutamine-hydrolyzing] from Shewanella baltica (strain OS155 / ATCC BAA-1091).